The sequence spans 256 residues: NAD-dependent protein deacetylase (256 aa).

The Deacetylase sirtuin-type domain maps to Met-1 to Glu-254. 8 residues coordinate NAD(+): Ala-28, Thr-32, Phe-39, Arg-40, Gln-105, Ile-107, Asp-108, and His-123. Phe-39 is a binding site for nicotinamide. Nicotinamide is bound by residues Ile-107 and Asp-108. His-123 acts as the Proton acceptor in catalysis. Zn(2+)-binding residues include Cys-131, Cys-134, Cys-156, and Cys-159. NAD(+) contacts are provided by Thr-197, Ser-198, and Asn-222.

The protein belongs to the sirtuin family. Class U subfamily. Zn(2+) serves as cofactor.

The protein localises to the cytoplasm. The catalysed reaction is N(6)-acetyl-L-lysyl-[protein] + NAD(+) + H2O = 2''-O-acetyl-ADP-D-ribose + nicotinamide + L-lysyl-[protein]. Functionally, NAD-dependent protein deacetylase which modulates the activities of several enzymes which are inactive in their acetylated form. In Thermodesulfovibrio yellowstonii (strain ATCC 51303 / DSM 11347 / YP87), this protein is NAD-dependent protein deacetylase.